We begin with the raw amino-acid sequence, 242 residues long: Coiled-coil domain-containing protein 107 (242 aa).

Positions 1–24 (MEGAGPVLSILGLLLVSAPFGVLG) are cleaved as a signal peptide. The disordered stretch occupies residues 27-62 (PSADLGAHPERGSQVSPGTTEPRRQPPPKDQRERAR). Residues 47 to 62 (EPRRQPPPKDQRERAR) show a composition bias toward basic and acidic residues. A helical membrane pass occupies residues 65–85 (SLSLGALYTAAVVAFVLFKCL). The stretch at 97-132 (EKNKKKSSQSEQQLVQLTQQLAQTEQHLNHLMTQLD) forms a coiled coil. The interval 186–210 (KEDQEAGNSQAWEEPITWSPETRNL) is disordered.

The protein localises to the membrane. This Mus musculus (Mouse) protein is Coiled-coil domain-containing protein 107 (Ccdc107).